The primary structure comprises 311 residues: Homeobox-leucine zipper protein HOX1 (311 aa).

Disordered regions lie at residues 29–69 (AGGA…SDHR) and 97–160 (AETT…KKLR). A compositionally biased stretch (low complexity) spans 119 to 145 (SSPNSTLSSLSGKRGAPSAATAAAAAA). Positions 154 to 213 (GSRKKLRLSKDQAAVLEDTFKEHNTLNPKQKAALARQLNLKPRQVEVWFQNRRARTKLKQ) form a DNA-binding region, homeobox. Residues 212 to 256 (KQTEVDCELLKRCCETLTDENRRLHRELQELRALKLATAAAAPHH) form a leucine-zipper region. Residues 279–311 (SAATTTRNNSGAAPARPVPTRPWPPAAAQRSSA) form a disordered region. Residues 280-289 (AATTTRNNSG) show a composition bias toward polar residues. Residues 294–303 (RPVPTRPWPP) show a composition bias toward pro residues.

Belongs to the HD-ZIP homeobox family. Class II subfamily. Homodimer. May form a heterodimer with HOX2, HOX3 or HOX7. Expressed in root provascular and vascular cylinder, provascular and vascular strands of leaves, provascular and vascular strands of the whole panicle, in mature embryo provascular bundles of scutellum and embryonic axis and provascular and vascular strands of young immature spikelet organs. Expressed in differentiating and differentiated xylem and phloem elements, and in outer and inner bundle sheath cells of all vascular bundles. Expressed in auricles, ligules, culm, guard cells brac hairs and pollen.

It localises to the nucleus. Its function is as follows. Probable transcription repressor involved leaf development. Binds to the DNA sequence 5'-CAAT[GC]ATTG-3'. May act as a regulatory switch to specify provascular cell fate. In Oryza sativa subsp. indica (Rice), this protein is Homeobox-leucine zipper protein HOX1 (HOX1).